The primary structure comprises 141 residues: Nucleoside triphosphatase NudI (141 aa).

The Nudix hydrolase domain occupies 1–141; it reads MRQRTIVCPL…RHTLALKGLL (141 aa). Positions 38-59 match the Nudix box motif; the sequence is GGVEPGERIEEALRREVREELG.

Belongs to the Nudix hydrolase family. NudI subfamily. As to quaternary structure, monomer. Requires Mg(2+) as cofactor.

The catalysed reaction is a ribonucleoside 5'-triphosphate + H2O = a ribonucleoside 5'-phosphate + diphosphate + H(+). It catalyses the reaction a 2'-deoxyribonucleoside 5'-triphosphate + H2O = a 2'-deoxyribonucleoside 5'-phosphate + diphosphate + H(+). The enzyme catalyses dUTP + H2O = dUMP + diphosphate + H(+). It carries out the reaction dTTP + H2O = dTMP + diphosphate + H(+). The catalysed reaction is dCTP + H2O = dCMP + diphosphate + H(+). Catalyzes the hydrolysis of nucleoside triphosphates, with a preference for pyrimidine deoxynucleoside triphosphates (dUTP, dTTP and dCTP). The chain is Nucleoside triphosphatase NudI from Salmonella schwarzengrund (strain CVM19633).